Here is a 66-residue protein sequence, read N- to C-terminus: Large ribosomal subunit protein bL35 (66 aa).

The tract at residues 21–40 (KIKSTQSAKRHGMTKRSKRS) is disordered. Positions 28–40 (AKRHGMTKRSKRS) are enriched in basic residues.

This sequence belongs to the bacterial ribosomal protein bL35 family.

The protein is Large ribosomal subunit protein bL35 of Ehrlichia canis (strain Jake).